We begin with the raw amino-acid sequence, 593 residues long: Autophagy-related protein 22-2 (593 aa).

Residues 42–62 (YGVAAEVFAVCGVGSFLPLTL) traverse the membrane as a helical segment. N-linked (GlcNAc...) asparagine glycosylation occurs at asparagine 90. Transmembrane regions (helical) follow at residues 112-132 (SFAM…LVSF), 159-179 (LFML…VIGV), and 181-201 (CLGS…ANDP). The tract at residues 228-261 (SWTDEEDTGDHAGPAGSKKAVEPEKASSSTSPEL) is disordered. The next 4 membrane-spanning stretches (helical) occupy residues 271 to 291 (GVGL…LLLF), 305 to 325 (LPLR…TVVC), 377 to 397 (VVVF…VSGT), and 415 to 435 (LLSI…PIVA). An N-linked (GlcNAc...) asparagine glycan is attached at asparagine 443. Transmembrane regions (helical) follow at residues 448-468 (LCIA…IPFI), 480-500 (WEIF…ASYC), 525-545 (KGSS…TGSV), and 548-568 (GFIF…LVNA).

Belongs to the ATG22 family.

It is found in the vacuole membrane. In terms of biological role, vacuolar effluxer which mediate the efflux of amino acids resulting from autophagic degradation. The release of autophagic amino acids allows the maintenance of protein synthesis and viability during nitrogen starvation. This is Autophagy-related protein 22-2 (atg22-2) from Emericella nidulans (strain FGSC A4 / ATCC 38163 / CBS 112.46 / NRRL 194 / M139) (Aspergillus nidulans).